A 98-amino-acid polypeptide reads, in one-letter code: Tax1-binding protein 3 (98 aa).

Ser-2 is modified (N-acetylserine). The 76-residue stretch at 12 to 87 (VVQRVEIHKL…VVRLLVTRQS (76 aa)) folds into the PDZ domain.

In terms of assembly, interacts (via its PDZ domain) with GLS2. Interacts (via its PDZ domain) with RTKN (via the C-terminal region); this interaction facilitates Rho-mediated activation of the FOS serum response element (SRE). Interacts (via PDZ domain) with ARHGEF16. Interacts (via PDZ domain) with KCNJ4 (via C-terminus). Competes with LIN7A for KCNJ4 binding. Interacts (via its PDZ domain) with CTNNB1; this interaction inhibits the transcriptional activity of CTNNB1. Interacts with ADGRB2. In terms of tissue distribution, detected in kidney distal convoluted tubules (at protein level).

The protein resides in the cytoplasm. It localises to the nucleus. Its subcellular location is the cell membrane. May regulate a number of protein-protein interactions by competing for PDZ domain binding sites. Binds CTNNB1 and may thereby act as an inhibitor of the Wnt signaling pathway. Competes with LIN7A for KCNJ4 binding, and thereby promotes KCNJ4 internalization. May play a role in the Rho signaling pathway. This is Tax1-binding protein 3 from Rattus norvegicus (Rat).